The primary structure comprises 2027 residues: Dedicator of cytokinesis protein 3 (2027 aa).

The SH3 domain occupies 6–67; it reads EEEKYGVVIC…PANYIHLKKA (62 aa). The C2 DOCK-type domain occupies 421-598; it reads RNDLYLTLEK…ESFFISTQLS (178 aa). Residues 1225 to 1632 form the DOCKER domain; it reads KSEINKEEMY…LYHEFPGLDK (408 aa). Ser-1655 carries the post-translational modification Phosphoserine. Disordered stretches follow at residues 1672–1695, 1731–1768, 1846–1925, and 1971–2027; these read GTGRHSSSSLSSHASSEAGNMMMM, SSSQASPSSSSLSSTHSAPSQMITSAPSSTRGSPSLPD, DTPP…DEGL, and PPKP…RGEQ. 2 stretches are compositionally biased toward low complexity: residues 1676-1695 and 1731-1751; these read HSSSSLSSHASSEAGNMMMM and SSSQASPSSSSLSSTHSAPSQ. Polar residues predominate over residues 1752 to 1763; the sequence is MITSAPSSTRGS. Positions 1877 to 1899 are enriched in low complexity; that stretch reads GSNSTLSGSASSGVSSLSESNFG. The SH3-binding motif lies at 1967–1973; sequence PPALPPK. Composition is skewed to basic and acidic residues over residues 1981 to 1998 and 2011 to 2027; these read ALEHDEGMLLREEAERPR and VKEEQARLAWEHGRGEQ.

Belongs to the DOCK family. As to quaternary structure, interacts with presenilin proteins PSEN1 and PSEN2. Interacts with CRK. Expressed in brain, spinal cord, pituitary gland, testis. Not expressed in heart, liver, kidney, spleen and lung. In brain, it is highly expressed in the cerebral cortex and hippocampus, while it is absent in other tissues, except in spinal cord. In the cerebral cortex, it is found within the intermediate (III and IV) and deep (V and VI) layers, whereas it is weakly expressed in superficial layer I. It is also abundant in the piriform cortex. Within the hippocampus, it is expressed in the pyramidal neurons of the CA1, CA2, and CA3 regions and the dentate gyrus.

It is found in the cytoplasm. Potential guanine nucleotide exchange factor (GEF). GEF proteins activate some small GTPases by exchanging bound GDP for free GTP. Its interaction with presenilin proteins as well as its ability to stimulate Tau/MAPT phosphorylation suggest that it may be involved in Alzheimer disease. Ectopic expression in nerve cells decreases the secretion of amyloid-beta APBA1 protein and lowers the rate of cell-substratum adhesion, suggesting that it may affect the function of some small GTPase involved in the regulation of actin cytoskeleton or cell adhesion receptors. The polypeptide is Dedicator of cytokinesis protein 3 (Dock3) (Mus musculus (Mouse)).